Consider the following 648-residue polypeptide: Phosphomethylpyrimidine synthase (648 aa).

Substrate contacts are provided by residues asparagine 236, methionine 265, tyrosine 294, histidine 330, 350-352 (SRG), 391-394 (DGLR), and glutamate 430. Zn(2+) is bound at residue histidine 434. Tyrosine 457 lines the substrate pocket. Histidine 498 contributes to the Zn(2+) binding site. [4Fe-4S] cluster contacts are provided by cysteine 578, cysteine 581, and cysteine 586.

This sequence belongs to the ThiC family. In terms of assembly, homodimer. [4Fe-4S] cluster serves as cofactor.

The catalysed reaction is 5-amino-1-(5-phospho-beta-D-ribosyl)imidazole + S-adenosyl-L-methionine = 4-amino-2-methyl-5-(phosphooxymethyl)pyrimidine + CO + 5'-deoxyadenosine + formate + L-methionine + 3 H(+). It functions in the pathway cofactor biosynthesis; thiamine diphosphate biosynthesis. In terms of biological role, catalyzes the synthesis of the hydroxymethylpyrimidine phosphate (HMP-P) moiety of thiamine from aminoimidazole ribotide (AIR) in a radical S-adenosyl-L-methionine (SAM)-dependent reaction. The sequence is that of Phosphomethylpyrimidine synthase from Aliivibrio salmonicida (strain LFI1238) (Vibrio salmonicida (strain LFI1238)).